We begin with the raw amino-acid sequence, 102 residues long: uncharacterized protein (102 aa).

The chain crosses the membrane as a helical span at residues 36–55; the sequence is IISLLAIFIKMCLWLWKQFL.

The protein localises to the membrane. This is an uncharacterized protein from Homo sapiens (Human).